The sequence spans 253 residues: Type III pantothenate kinase (253 aa).

6 to 13 (DVGNTNTV) serves as a coordination point for ATP. Position 103 to 106 (103 to 106 (GADR)) interacts with substrate. The active-site Proton acceptor is the D105. Residue D125 coordinates K(+). T128 lines the ATP pocket. T180 lines the substrate pocket.

Belongs to the type III pantothenate kinase family. As to quaternary structure, homodimer. NH4(+) is required as a cofactor. The cofactor is K(+).

Its subcellular location is the cytoplasm. The catalysed reaction is (R)-pantothenate + ATP = (R)-4'-phosphopantothenate + ADP + H(+). The protein operates within cofactor biosynthesis; coenzyme A biosynthesis; CoA from (R)-pantothenate: step 1/5. Its function is as follows. Catalyzes the phosphorylation of pantothenate (Pan), the first step in CoA biosynthesis. In Parafrankia sp. (strain EAN1pec), this protein is Type III pantothenate kinase.